Reading from the N-terminus, the 226-residue chain is LexA repressor (226 aa).

A DNA-binding region (H-T-H motif) is located at residues 28 to 48 (RAEICQSLGFRSPNAAESHLR). Active-site for autocatalytic cleavage activity residues include Ser133 and Lys170.

This sequence belongs to the peptidase S24 family. As to quaternary structure, homodimer.

It carries out the reaction Hydrolysis of Ala-|-Gly bond in repressor LexA.. Its function is as follows. Represses a number of genes involved in the response to DNA damage (SOS response), including recA and lexA. In the presence of single-stranded DNA, RecA interacts with LexA causing an autocatalytic cleavage which disrupts the DNA-binding part of LexA, leading to derepression of the SOS regulon and eventually DNA repair. The chain is LexA repressor from Halorhodospira halophila (strain DSM 244 / SL1) (Ectothiorhodospira halophila (strain DSM 244 / SL1)).